The chain runs to 165 residues: V-type proton ATPase 16 kDa proteolipid subunit (165 aa).

Residues 1-12 (MSTVFNGDETAP) lie on the Lumenal side of the membrane. A helical membrane pass occupies residues 13–33 (FFGFLGAAAALVFSCMGAAYG). Residues 34 to 55 (TAKSGVGVASMGVMRPELVMKS) are Cytoplasmic-facing. A helical membrane pass occupies residues 56-76 (IVPVVMAGVLGIYGLIIAVII). At 77–95 (STGINPKAKSYYLFDGYAH) the chain is on the lumenal side. Residues 96 to 117 (LSSGLACGLAGLSAGMAIGIVG) form a helical membrane-spanning segment. Residues 118–129 (DAGVRANAQQPK) lie on the Cytoplasmic side of the membrane. Residues 130-155 (LFVGMILILIFAEALALYGLIVGIIL) traverse the membrane as a helical segment. Residues 156 to 165 (SSRAGQSRAD) lie on the Lumenal side of the membrane.

It belongs to the V-ATPase proteolipid subunit family. In terms of assembly, V-ATPase is a heteromultimeric enzyme composed of a peripheral catalytic V1 complex (main components: subunits A, B, C, D, E, and F) attached to an integral membrane V0 proton pore complex (main component: the proteolipid protein; which is present as a hexamer that forms the proton-conducting pore).

The protein resides in the vacuole membrane. In terms of biological role, proton-conducting pore forming subunit of the membrane integral V0 complex of vacuolar ATPase. V-ATPase is responsible for acidifying a variety of intracellular compartments in eukaryotic cells. This is V-type proton ATPase 16 kDa proteolipid subunit (VMAC1) from Mesembryanthemum crystallinum (Common ice plant).